We begin with the raw amino-acid sequence, 722 residues long: MQVSSVNNVKIYNLSHGKSLPEWLSDRKKRVLQKKDVDIQRRIELIQDFEMPTVCTSIRVSRDGQYILAAGTYKPRVRCYDTYQLSLKFERCLDSDVVTFDILSDDYSKLVFLHIDRYVEFHSQHGHYYKTRIPKFGRDFSYHSPSCDLYFVGASSEVFRLNLEQGRFLNSLQTDAAEMNVCDINPVHQLFAAGTLEGRVDCWDPRVRTRVAALDCALSSITDNTEVEGLPSVSALKFNDSLGLAVGTSTGQILVYDLRSSRPLLVKDHYYGLPIKSLHFHNSLDLVLSADSKIIKMWNKDNGKVFSSIEPQANINDVCLYPASGMLFTANEDPKMNTFYIPALGPAPRWCSFLDNLTEELEENPESTIYDDYKFVTRKDLESLGLAHLIGSPLLRAYMHGFFMDIRLYHKVKTMVNPFAYEEYRKDKIRQKIEESRAQRVQLKKLPKVNKELALKLMEEDTELTNKKKKKKANVAGNLLMDDRFKVMFENPDYQVDERSEEFRLLNPIISNVAERRRKSLLEEEQEQAEEEQEPEGRGSSEDDSSDEDDKGWVQEVREQRRLLRMEERERSYIQRQERRQQDRNTRLQSSDTHTQQSHGAQKPRFYQIKSGEEFRSFSDVSRKQKTHKASLEERLQRLEKSDTLSLNDTAVGSKQLTFTLKKTEKQRFQQQAERDHHEERRRIRRSAGHLHSNRGGGRGRGGGRGRGGGRGRGGGRGRRPF.

WD repeat units follow at residues 50 to 90 (EMPT…LKFE), 174 to 213 (TDAAEMNVCDINPVHQLFAAGTLEGRVDCWDPRVRTRVAA), 228 to 266 (EGLPSVSALKFNDSLGLAVGTSTGQILVYDLRSSRPLLV), 270 to 308 (YYGLPIKSLHFHNSLDLVLSADSKIIKMWNKDNGKVFSS), and 310 to 349 (EPQANINDVCLYPASGMLFTANEDPKMNTFYIPALGPAPR). 2 coiled-coil regions span residues 423 to 476 (EYRK…ANVA) and 511 to 534 (SNVAERRRKSLLEEEQEQAEEEQE). 4 disordered regions span residues 521-555 (LLEEEQEQAEEEQEPEGRGSSEDDSSDEDDKGWVQ), 572-607 (SYIQRQERRQQDRNTRLQSSDTHTQQSHGAQKPRFY), 616-635 (RSFSDVSRKQKTHKASLEER), and 664-722 (TEKQ…RRPF). Residues 523–534 (EEEQEQAEEEQE) are compositionally biased toward acidic residues. Basic and acidic residues predominate over residues 572–586 (SYIQRQERRQQDRNT). The segment covering 587 to 600 (RLQSSDTHTQQSHG) has biased composition (polar residues). A coiled-coil region spans residues 620 to 681 (DVSRKQKTHK…QAERDHHEER (62 aa)). Residues 664 to 682 (TEKQRFQQQAERDHHEERR) are compositionally biased toward basic and acidic residues. Basic residues-rich tracts occupy residues 683 to 693 (RIRRSAGHLHS) and 702 to 722 (GGGRGRGGGRGRGGGRGRRPF).

The protein belongs to the WD repeat NOL10/ENP2 family.

It localises to the nucleus. The protein resides in the nucleolus. The sequence is that of Nucleolar protein 10 (nol10) from Danio rerio (Zebrafish).